The sequence spans 308 residues: MSEEKKYELWLDNYFFKPNFWQKCLAFVLLPLSVLYAFFAILNTFFRKKIVFKKPVISVGNLSFGGNGKTPLCKAIAREFDGVFIVLRGYKRKSKGLFVVKNQNEILCTLAQSGDEAMEYAFEENVKGVIVSEDRVKGIKKAFELGAKIVVLDDAFSKFHIKKFDILLESKIKPYFNFILPSGSYRLPKFYERRADFIALEGRDFLRYSFVKKNLKAVLVTAIAKPFRLYEHFIKARACYFFKDHYEFKKEELENLLKKHNCDTLMLTFKDFVKVKDFGFKCQIIELNIELKDSLREKIKTYIKEFEQ.

63–70 (SFGGNGKT) is a binding site for ATP.

The protein belongs to the LpxK family.

It carries out the reaction a lipid A disaccharide + ATP = a lipid IVA + ADP + H(+). Its pathway is glycolipid biosynthesis; lipid IV(A) biosynthesis; lipid IV(A) from (3R)-3-hydroxytetradecanoyl-[acyl-carrier-protein] and UDP-N-acetyl-alpha-D-glucosamine: step 6/6. In terms of biological role, transfers the gamma-phosphate of ATP to the 4'-position of a tetraacyldisaccharide 1-phosphate intermediate (termed DS-1-P) to form tetraacyldisaccharide 1,4'-bis-phosphate (lipid IVA). The polypeptide is Tetraacyldisaccharide 4'-kinase (Campylobacter jejuni subsp. doylei (strain ATCC BAA-1458 / RM4099 / 269.97)).